The sequence spans 467 residues: Ribulose bisphosphate carboxylase large chain (467 aa).

K5 is subject to N6,N6,N6-trimethyllysine. The substrate site is built by N114 and T164. The active-site Proton acceptor is K166. Residue K168 participates in substrate binding. The Mg(2+) site is built by K192, D194, and E195. K192 is subject to N6-carboxylysine. The active-site Proton acceptor is H285. Residues R286, H318, and S370 each contribute to the substrate site.

Belongs to the RuBisCO large chain family. Type I subfamily. In terms of assembly, heterohexadecamer of 8 large chains and 8 small chains; disulfide-linked. The disulfide link is formed within the large subunit homodimers. The cofactor is Mg(2+). The disulfide bond which can form in the large chain dimeric partners within the hexadecamer appears to be associated with oxidative stress and protein turnover.

It is found in the plastid. The protein resides in the chloroplast. It carries out the reaction 2 (2R)-3-phosphoglycerate + 2 H(+) = D-ribulose 1,5-bisphosphate + CO2 + H2O. The catalysed reaction is D-ribulose 1,5-bisphosphate + O2 = 2-phosphoglycolate + (2R)-3-phosphoglycerate + 2 H(+). Functionally, ruBisCO catalyzes two reactions: the carboxylation of D-ribulose 1,5-bisphosphate, the primary event in carbon dioxide fixation, as well as the oxidative fragmentation of the pentose substrate in the photorespiration process. Both reactions occur simultaneously and in competition at the same active site. The polypeptide is Ribulose bisphosphate carboxylase large chain (Tasmannia insipida (Pepperbush)).